The sequence spans 347 residues: uncharacterized protein (347 aa).

The Cytoplasmic portion of the chain corresponds to 1–44 (MWNPKKKSEALAKFKSFPYPKPGTSNVLDSKEGDTRRKYFTKTH). Residues 45–62 (LHRLFVFVVLLLCSGYFL) traverse the membrane as a helical; Signal-anchor for type II membrane protein segment. At 63 to 347 (KHTLLTRPKE…RGWRKLVPFL (285 aa)) the chain is on the lumenal side.

This sequence belongs to the glycosyltransferase 34 family.

The protein localises to the endoplasmic reticulum membrane. This is an uncharacterized protein from Schizosaccharomyces pombe (strain 972 / ATCC 24843) (Fission yeast).